The chain runs to 166 residues: Interferon gamma (166 aa).

The signal sequence occupies residues 1 to 23 (MNYTSYILAFQLCVILCSSGYYC). The residue at position 24 (Gln24) is a Pyrrolidone carboxylic acid. N-linked (GlcNAc...) asparagine glycans are attached at residues Asn39 and Asn106.

Belongs to the type II (or gamma) interferon family. Homodimer. Interacts with IFNGR1 (via extracellular domain); this interaction promotes IFNGR1 dimerization. Released primarily from activated T lymphocytes.

It localises to the secreted. Type II interferon produced by immune cells such as T-cells and NK cells that plays crucial roles in antimicrobial, antiviral, and antitumor responses by activating effector immune cells and enhancing antigen presentation. Primarily signals through the JAK-STAT pathway after interaction with its receptor IFNGR1 to affect gene regulation. Upon IFNG binding, IFNGR1 intracellular domain opens out to allow association of downstream signaling components JAK2, JAK1 and STAT1, leading to STAT1 activation, nuclear translocation and transcription of IFNG-regulated genes. Many of the induced genes are transcription factors such as IRF1 that are able to further drive regulation of a next wave of transcription. Plays a role in class I antigen presentation pathway by inducing a replacement of catalytic proteasome subunits with immunoproteasome subunits. In turn, increases the quantity, quality, and repertoire of peptides for class I MHC loading. Increases the efficiency of peptide generation also by inducing the expression of activator PA28 that associates with the proteasome and alters its proteolytic cleavage preference. Up-regulates as well MHC II complexes on the cell surface by promoting expression of several key molecules such as cathepsins B/CTSB, H/CTSH, and L/CTSL. Participates in the regulation of hematopoietic stem cells during development and under homeostatic conditions by affecting their development, quiescence, and differentiation. This is Interferon gamma (IFNG) from Ailuropoda melanoleuca (Giant panda).